The chain runs to 417 residues: Serine hydroxymethyltransferase (417 aa).

(6S)-5,6,7,8-tetrahydrofolate is bound by residues Leu-121 and 125 to 127 (GHL). Lys-229 carries the N6-(pyridoxal phosphate)lysine modification. 355-357 (SPF) lines the (6S)-5,6,7,8-tetrahydrofolate pocket.

It belongs to the SHMT family. In terms of assembly, homodimer. Pyridoxal 5'-phosphate is required as a cofactor.

The protein resides in the cytoplasm. The catalysed reaction is (6R)-5,10-methylene-5,6,7,8-tetrahydrofolate + glycine + H2O = (6S)-5,6,7,8-tetrahydrofolate + L-serine. Its pathway is one-carbon metabolism; tetrahydrofolate interconversion. It participates in amino-acid biosynthesis; glycine biosynthesis; glycine from L-serine: step 1/1. Its function is as follows. Catalyzes the reversible interconversion of serine and glycine with tetrahydrofolate (THF) serving as the one-carbon carrier. This reaction serves as the major source of one-carbon groups required for the biosynthesis of purines, thymidylate, methionine, and other important biomolecules. Also exhibits THF-independent aldolase activity toward beta-hydroxyamino acids, producing glycine and aldehydes, via a retro-aldol mechanism. The protein is Serine hydroxymethyltransferase of Shewanella baltica (strain OS185).